Here is a 158-residue protein sequence, read N- to C-terminus: Cyclic pyranopterin monophosphate synthase (158 aa).

Substrate is bound by residues 74–76 (MCH) and 112–113 (ME). The active site involves Asp127.

It belongs to the MoaC family. Homohexamer; trimer of dimers.

It carries out the reaction (8S)-3',8-cyclo-7,8-dihydroguanosine 5'-triphosphate = cyclic pyranopterin phosphate + diphosphate. It participates in cofactor biosynthesis; molybdopterin biosynthesis. Functionally, catalyzes the conversion of (8S)-3',8-cyclo-7,8-dihydroguanosine 5'-triphosphate to cyclic pyranopterin monophosphate (cPMP). This chain is Cyclic pyranopterin monophosphate synthase, found in Thermoanaerobacter sp. (strain X514).